Here is a 332-residue protein sequence, read N- to C-terminus: UDP-3-O-acylglucosamine N-acyltransferase (332 aa).

Residue His231 is the Proton acceptor of the active site.

It belongs to the transferase hexapeptide repeat family. LpxD subfamily. As to quaternary structure, homotrimer.

The catalysed reaction is a UDP-3-O-[(3R)-3-hydroxyacyl]-alpha-D-glucosamine + a (3R)-hydroxyacyl-[ACP] = a UDP-2-N,3-O-bis[(3R)-3-hydroxyacyl]-alpha-D-glucosamine + holo-[ACP] + H(+). The protein operates within bacterial outer membrane biogenesis; LPS lipid A biosynthesis. Catalyzes the N-acylation of UDP-3-O-acylglucosamine using 3-hydroxyacyl-ACP as the acyl donor. Is involved in the biosynthesis of lipid A, a phosphorylated glycolipid that anchors the lipopolysaccharide to the outer membrane of the cell. The chain is UDP-3-O-acylglucosamine N-acyltransferase from Ruthia magnifica subsp. Calyptogena magnifica.